The primary structure comprises 346 residues: Ribosomal RNA small subunit methyltransferase H (346 aa).

S-adenosyl-L-methionine-binding positions include 46–48 (GGY), Asp63, Phe90, Asp113, and Gln120. Residues 270–346 (GGSAGSRHMP…LPETNELARS (77 aa)) are disordered.

It belongs to the methyltransferase superfamily. RsmH family.

The protein resides in the cytoplasm. The catalysed reaction is cytidine(1402) in 16S rRNA + S-adenosyl-L-methionine = N(4)-methylcytidine(1402) in 16S rRNA + S-adenosyl-L-homocysteine + H(+). Specifically methylates the N4 position of cytidine in position 1402 (C1402) of 16S rRNA. This chain is Ribosomal RNA small subunit methyltransferase H, found in Brucella abortus (strain S19).